Here is a 273-residue protein sequence, read N- to C-terminus: ATP synthase subunit a (273 aa).

The next 7 helical transmembrane spans lie at 34-54 (IINMDTIFWSIFAGVVGCLFM), 94-114 (FIAPLALTVFVWVALMNSLDF), 115-135 (LPVDMFSAFFHAVGLDSLITH), 143-163 (DLNGTMGIALGVFALMIFYNI), 171-191 (FVHELFAAPFGIWLAPFNLLL), 218-238 (FLLIALLGSTATAFGFFGHVV), and 244-264 (AIFHILIVFLQAFIFMMLTLV).

It belongs to the ATPase A chain family. In terms of assembly, F-type ATPases have 2 components, CF(1) - the catalytic core - and CF(0) - the membrane proton channel. CF(1) has five subunits: alpha(3), beta(3), gamma(1), delta(1), epsilon(1). CF(0) has three main subunits: a(1), b(2) and c(9-12). The alpha and beta chains form an alternating ring which encloses part of the gamma chain. CF(1) is attached to CF(0) by a central stalk formed by the gamma and epsilon chains, while a peripheral stalk is formed by the delta and b chains.

The protein resides in the cell inner membrane. In terms of biological role, key component of the proton channel; it plays a direct role in the translocation of protons across the membrane. This chain is ATP synthase subunit a, found in Janthinobacterium sp. (strain Marseille) (Minibacterium massiliensis).